The chain runs to 459 residues: NADP-specific glutamate dehydrogenase (459 aa).

K114 is an active-site residue.

It belongs to the Glu/Leu/Phe/Val dehydrogenases family. In terms of assembly, homohexamer.

The enzyme catalyses L-glutamate + NADP(+) + H2O = 2-oxoglutarate + NH4(+) + NADPH + H(+). The chain is NADP-specific glutamate dehydrogenase (gdhA) from Emericella nidulans (strain FGSC A4 / ATCC 38163 / CBS 112.46 / NRRL 194 / M139) (Aspergillus nidulans).